Here is a 238-residue protein sequence, read N- to C-terminus: DnaA regulatory inactivator Hda (238 aa).

The protein belongs to the DnaA family. HdA subfamily. In terms of assembly, the active form seems to be an ADP-bound monomer. Forms the RIDA complex (regulatory inactivation of DnaA) of ATP-DnaA, ADP-Hda and the DNA-loaded beta sliding clamp (dnaN).

Its function is as follows. Mediates the interaction of DNA replication initiator protein DnaA with DNA polymerase subunit beta sliding clamp (dnaN). Stimulates hydrolysis of ATP-DnaA to ADP-DnaA, rendering DnaA inactive for reinitiation, a process called regulatory inhibition of DnaA or RIDA. The sequence is that of DnaA regulatory inactivator Hda from Pectobacterium atrosepticum (strain SCRI 1043 / ATCC BAA-672) (Erwinia carotovora subsp. atroseptica).